Reading from the N-terminus, the 184-residue chain is MPNTQSPYNAFAMLLSSNGHPVTPAELHGLLIGRSCAGAGFDADAWLADAAQLLEIEPGDSVRNALVGLQEMVKGELTSDDMAIVLLLPTDDAALSDRATALGQWCQGFVTGFGLNAGGKDLSDEAKEVLQDLVAISQVQEALEESEDGESDYMEVMEYLRVAPLLLFSELAKPAAPAPKPSLH.

Belongs to the UPF0149 family.

This is UPF0149 protein PP_5201 from Pseudomonas putida (strain ATCC 47054 / DSM 6125 / CFBP 8728 / NCIMB 11950 / KT2440).